Here is a 1039-residue protein sequence, read N- to C-terminus: FHIP family protein GG24907 (1039 aa).

A phosphoserine mark is found at Ser-498 and Ser-805. 3 disordered regions span residues 831-877 (ATPT…SASS), 904-945 (GISQ…SNSS), and 957-984 (SNTT…SEPA). Polar residues-rich tracts occupy residues 855 to 877 (TSMF…SASS) and 904 to 924 (GISQ…TQPQ). A compositionally biased stretch (low complexity) spans 925-945 (AGASRTGATATSAAASGSNSS). The span at 957 to 966 (SNTTTHSAST) shows a compositional bias: polar residues.

The protein belongs to the FHIP family.

The sequence is that of FHIP family protein GG24907 from Drosophila erecta (Fruit fly).